Reading from the N-terminus, the 331-residue chain is Ferrochelatase (331 aa).

Residues His-187 and Glu-286 each contribute to the Fe cation site.

The protein belongs to the ferrochelatase family.

The protein localises to the cytoplasm. The enzyme catalyses heme b + 2 H(+) = protoporphyrin IX + Fe(2+). It participates in porphyrin-containing compound metabolism; protoheme biosynthesis; protoheme from protoporphyrin-IX: step 1/1. Its function is as follows. Catalyzes the ferrous insertion into protoporphyrin IX. The polypeptide is Ferrochelatase (Legionella pneumophila subsp. pneumophila (strain Philadelphia 1 / ATCC 33152 / DSM 7513)).